Reading from the N-terminus, the 87-residue chain is uncharacterized protein (87 aa).

The disordered stretch occupies residues 67-87; the sequence is TGGDPREAVVRPADQVEGYTG.

This is an uncharacterized protein from Mycobacterium bovis (strain ATCC BAA-935 / AF2122/97).